A 185-amino-acid polypeptide reads, in one-letter code: Ribosome-recycling factor (185 aa).

This sequence belongs to the RRF family.

The protein localises to the cytoplasm. Responsible for the release of ribosomes from messenger RNA at the termination of protein biosynthesis. May increase the efficiency of translation by recycling ribosomes from one round of translation to another. This Pseudomonas savastanoi pv. phaseolicola (strain 1448A / Race 6) (Pseudomonas syringae pv. phaseolicola (strain 1448A / Race 6)) protein is Ribosome-recycling factor.